A 176-amino-acid polypeptide reads, in one-letter code: Bifunctional protein PyrR (176 aa).

The PRPP-binding signature appears at 93-105 (VILVDDVLYTGRT).

The protein belongs to the purine/pyrimidine phosphoribosyltransferase family. PyrR subfamily. In terms of assembly, homodimer and homohexamer; in equilibrium.

It carries out the reaction UMP + diphosphate = 5-phospho-alpha-D-ribose 1-diphosphate + uracil. In terms of biological role, regulates transcriptional attenuation of the pyrimidine nucleotide (pyr) operon by binding in a uridine-dependent manner to specific sites on pyr mRNA. This disrupts an antiterminator hairpin in the RNA and favors formation of a downstream transcription terminator, leading to a reduced expression of downstream genes. Also displays a weak uracil phosphoribosyltransferase activity which is not physiologically significant. The chain is Bifunctional protein PyrR from Streptococcus mutans serotype c (strain ATCC 700610 / UA159).